The primary structure comprises 340 residues: tRNA N6-adenosine threonylcarbamoyltransferase (340 aa).

The Fe cation site is built by histidine 115 and histidine 119. Substrate is bound by residues 138–142 (VVSGG), aspartate 171, glycine 184, aspartate 188, and asparagine 278. Aspartate 306 provides a ligand contact to Fe cation.

The protein belongs to the KAE1 / TsaD family. Fe(2+) serves as cofactor.

It is found in the cytoplasm. The enzyme catalyses L-threonylcarbamoyladenylate + adenosine(37) in tRNA = N(6)-L-threonylcarbamoyladenosine(37) in tRNA + AMP + H(+). In terms of biological role, required for the formation of a threonylcarbamoyl group on adenosine at position 37 (t(6)A37) in tRNAs that read codons beginning with adenine. Is involved in the transfer of the threonylcarbamoyl moiety of threonylcarbamoyl-AMP (TC-AMP) to the N6 group of A37, together with TsaE and TsaB. TsaD likely plays a direct catalytic role in this reaction. This Clostridium botulinum (strain Kyoto / Type A2) protein is tRNA N6-adenosine threonylcarbamoyltransferase.